The primary structure comprises 158 residues: Small ribosomal subunit protein uS7 (158 aa).

It belongs to the universal ribosomal protein uS7 family. As to quaternary structure, part of the 30S ribosomal subunit. Contacts proteins S9 and S11.

Functionally, one of the primary rRNA binding proteins, it binds directly to 16S rRNA where it nucleates assembly of the head domain of the 30S subunit. Is located at the subunit interface close to the decoding center, probably blocks exit of the E-site tRNA. The chain is Small ribosomal subunit protein uS7 from Gluconacetobacter diazotrophicus (strain ATCC 49037 / DSM 5601 / CCUG 37298 / CIP 103539 / LMG 7603 / PAl5).